The following is a 342-amino-acid chain: Heat-inducible transcription repressor HrcA (342 aa).

Belongs to the HrcA family.

Negative regulator of class I heat shock genes (grpE-dnaK-dnaJ and groELS operons). Prevents heat-shock induction of these operons. The polypeptide is Heat-inducible transcription repressor HrcA (Oceanobacillus iheyensis (strain DSM 14371 / CIP 107618 / JCM 11309 / KCTC 3954 / HTE831)).